The following is a 159-amino-acid chain: Putative 4-hydroxy-4-methyl-2-oxoglutarate aldolase (159 aa).

Substrate contacts are provided by residues 78-81 (GDVI) and arginine 100. Aspartate 101 lines the a divalent metal cation pocket.

This sequence belongs to the class II aldolase/RraA-like family. In terms of assembly, homotrimer. It depends on a divalent metal cation as a cofactor.

The enzyme catalyses 4-hydroxy-4-methyl-2-oxoglutarate = 2 pyruvate. It catalyses the reaction oxaloacetate + H(+) = pyruvate + CO2. Catalyzes the aldol cleavage of 4-hydroxy-4-methyl-2-oxoglutarate (HMG) into 2 molecules of pyruvate. Also contains a secondary oxaloacetate (OAA) decarboxylase activity due to the common pyruvate enolate transition state formed following C-C bond cleavage in the retro-aldol and decarboxylation reactions. The sequence is that of Putative 4-hydroxy-4-methyl-2-oxoglutarate aldolase from Mycobacterium sp. (strain JLS).